The sequence spans 217 residues: 3,4-dihydroxy-2-butanone 4-phosphate synthase (217 aa).

D-ribulose 5-phosphate is bound by residues 37-38 (RE), aspartate 42, 150-154 (RRGHT), and glutamate 174. Glutamate 38 serves as a coordination point for Mg(2+). Histidine 153 contributes to the Mg(2+) binding site.

Belongs to the DHBP synthase family. In terms of assembly, homodimer. The cofactor is Mg(2+). It depends on Mn(2+) as a cofactor.

The catalysed reaction is D-ribulose 5-phosphate = (2S)-2-hydroxy-3-oxobutyl phosphate + formate + H(+). It participates in cofactor biosynthesis; riboflavin biosynthesis; 2-hydroxy-3-oxobutyl phosphate from D-ribulose 5-phosphate: step 1/1. Functionally, catalyzes the conversion of D-ribulose 5-phosphate to formate and 3,4-dihydroxy-2-butanone 4-phosphate. In Shewanella baltica (strain OS223), this protein is 3,4-dihydroxy-2-butanone 4-phosphate synthase.